A 546-amino-acid polypeptide reads, in one-letter code: Probable protein kinase UbiB (546 aa).

The region spanning 124–502 (DFEIKPLASA…HVRQGQSRYF (379 aa)) is the Protein kinase domain. ATP contacts are provided by residues 130–138 (LASASIAQV) and Lys153. Asp288 acts as the Proton acceptor in catalysis. Transmembrane regions (helical) follow at residues 501–521 (YFLGIGATLVLSGTFLLVSRP) and 522–542 (EWGLMPGWLMAGGLIAWFVGW).

This sequence belongs to the ABC1 family. UbiB subfamily.

Its subcellular location is the cell inner membrane. It functions in the pathway cofactor biosynthesis; ubiquinone biosynthesis [regulation]. In terms of biological role, is probably a protein kinase regulator of UbiI activity which is involved in aerobic coenzyme Q (ubiquinone) biosynthesis. The polypeptide is Probable protein kinase UbiB (Shigella boydii serotype 18 (strain CDC 3083-94 / BS512)).